The sequence spans 137 residues: Probable 4-amino-4-deoxy-L-arabinose-phosphoundecaprenol flippase subunit ArnF (137 aa).

The next 3 helical transmembrane spans lie at 43–63, 74–94, and 98–118; these read AIAVICASITAYALSMLFWLL, YSLLSISYALVYTLAATLPFF, and FTVSKTVGVTLIVAGVLTINL.

It belongs to the ArnF family. As to quaternary structure, heterodimer of ArnE and ArnF.

The protein localises to the cell inner membrane. Its pathway is bacterial outer membrane biogenesis; lipopolysaccharide biosynthesis. Functionally, translocates 4-amino-4-deoxy-L-arabinose-phosphoundecaprenol (alpha-L-Ara4N-phosphoundecaprenol) from the cytoplasmic to the periplasmic side of the inner membrane. This chain is Probable 4-amino-4-deoxy-L-arabinose-phosphoundecaprenol flippase subunit ArnF, found in Pseudomonas savastanoi pv. phaseolicola (strain 1448A / Race 6) (Pseudomonas syringae pv. phaseolicola (strain 1448A / Race 6)).